A 509-amino-acid chain; its full sequence is Photosystem II CP47 reaction center protein (509 aa).

Transmembrane regions (helical) follow at residues Ala-21–Ser-36, Ile-101–Trp-115, Gly-140–Phe-156, Ile-203–Thr-218, Val-237–Thr-252, and Asn-457–Arg-472.

This sequence belongs to the PsbB/PsbC family. PsbB subfamily. In terms of assembly, PSII is composed of 1 copy each of membrane proteins PsbA, PsbB, PsbC, PsbD, PsbE, PsbF, PsbH, PsbI, PsbJ, PsbK, PsbL, PsbM, PsbT, PsbX, PsbY, PsbZ, Psb30/Ycf12, at least 3 peripheral proteins of the oxygen-evolving complex and a large number of cofactors. It forms dimeric complexes. Requires Binds multiple chlorophylls. PSII binds additional chlorophylls, carotenoids and specific lipids. as cofactor.

The protein resides in the plastid. Its subcellular location is the chloroplast thylakoid membrane. Its function is as follows. One of the components of the core complex of photosystem II (PSII). It binds chlorophyll and helps catalyze the primary light-induced photochemical processes of PSII. PSII is a light-driven water:plastoquinone oxidoreductase, using light energy to abstract electrons from H(2)O, generating O(2) and a proton gradient subsequently used for ATP formation. The protein is Photosystem II CP47 reaction center protein of Trieres chinensis (Marine centric diatom).